A 148-amino-acid polypeptide reads, in one-letter code: Large ribosomal subunit protein bL9 (148 aa).

Belongs to the bacterial ribosomal protein bL9 family.

Functionally, binds to the 23S rRNA. This chain is Large ribosomal subunit protein bL9, found in Bifidobacterium animalis subsp. lactis (strain AD011).